A 265-amino-acid chain; its full sequence is Iron(3+)-hydroxamate import ATP-binding protein FhuC (265 aa).

Positions 12-248 constitute an ABC transporter domain; it reads FALRNISFRV…ETLEMIYGIP (237 aa). ATP-binding positions include 44–51 and 168–179; these read GHNGSGKS and CLLLDEPTSALD.

Belongs to the ABC transporter superfamily. Iron (Fe3+)-hydroxamate importer (TC 3.A.1.14.7) family. As to quaternary structure, the complex is composed of two ATP-binding proteins (FhuC), a transmembrane protein (FhuB) and a solute-binding protein (FhuD). FhuC interacts with FhuB.

The protein resides in the cell inner membrane. It carries out the reaction ATP + H2O + Fe(3+)-hydroxamate complex-[hydroxamate-binding protein]Side 1 = ADP + phosphate + Fe(3+)-hydroxamate complexSide 2 + [hydroxamate-binding protein]Side 1.. Its activity is regulated as follows. ATPase activity is inhibited by vanadate. Its function is as follows. Part of the ABC transporter complex FhuCDB involved in iron(3+)-hydroxamate import. Responsible for energy coupling to the transport system. The sequence is that of Iron(3+)-hydroxamate import ATP-binding protein FhuC (fhuC) from Escherichia coli (strain K12).